Here is a 682-residue protein sequence, read N- to C-terminus: T-box brain protein 1 (682 aa).

Disordered stretches follow at residues threonine 43–leucine 83 and serine 108–proline 127. Residues glycine 58–phenylalanine 68 show a composition bias toward polar residues. A compositionally biased stretch (low complexity) spans serine 108–alanine 122. The segment at residues leucine 213–aspartate 393 is a DNA-binding region (T-box). Threonine 408 carries the post-translational modification Phosphothreonine. Serine 410 carries the post-translational modification Phosphoserine. 2 disordered regions span residues proline 447 to arginine 483 and glycine 588 to valine 658. Positions proline 462 to glutamine 472 are enriched in polar residues. At serine 594 the chain carries Phosphoserine. A compositionally biased stretch (low complexity) spans serine 619–serine 629. Residue serine 641 is modified to Phosphoserine.

In terms of assembly, homodimer. Part of a complex containing CASK, TBR1 and TSPYL2; may modulate gene expression in response to neuronal synaptic activity. Interacts with FOXP2. Interacts with FOXP1. Interacts with BCL11A. In terms of tissue distribution, brain.

The protein localises to the nucleus. Transcriptional repressor involved in multiple aspects of cortical development, including neuronal migration, laminar and areal identity, and axonal projection. As transcriptional repressor of FEZF2, it blocks the formation of the corticospinal (CS) tract from layer 6 projection neurons, thereby restricting the origin of CS axons specifically to layer 5 neurons. This Homo sapiens (Human) protein is T-box brain protein 1 (TBR1).